A 150-amino-acid chain; its full sequence is 3-dehydroquinate dehydratase (150 aa).

Tyr-22 functions as the Proton acceptor in the catalytic mechanism. Positions 73, 79, and 86 each coordinate substrate. Residue His-99 is the Proton donor of the active site. Residues 100–101 (LT) and Arg-110 each bind substrate.

Belongs to the type-II 3-dehydroquinase family. In terms of assembly, homododecamer.

It catalyses the reaction 3-dehydroquinate = 3-dehydroshikimate + H2O. The protein operates within metabolic intermediate biosynthesis; chorismate biosynthesis; chorismate from D-erythrose 4-phosphate and phosphoenolpyruvate: step 3/7. In terms of biological role, catalyzes a trans-dehydration via an enolate intermediate. The polypeptide is 3-dehydroquinate dehydratase (Desulforudis audaxviator (strain MP104C)).